The sequence spans 1024 residues: E3 ISG15--protein ligase HERC5 (1024 aa).

A compositionally biased stretch (basic residues) spans Met-1–Gly-13. The segment at Met-1–Ser-28 is disordered. RCC1 repeat units follow at residues Asn-96 to Lys-155, Gly-156 to Met-208, Ser-209 to Gln-260, Gly-262 to Ser-312, and Leu-314 to Ile-364. One can recognise an HECT domain in the interval Glu-702–Gly-1024. The Glycyl thioester intermediate role is filled by Cys-994.

In terms of assembly, (Microbial infection) Interacts with human cytomegalovirus protein UL26; this interaction inhibits global protein ISGylation. As to quaternary structure, (Microbial infection) Interacts with Kaposi's sarcoma-associated herpesvirus protein v-IRF1; this interaction inhibits global protein ISGylation. Binds to CCNA1, CCNB1, CCND1 and CCNE1. Interacts with UBE2L6. Interacts with IRF3, this interaction is marginal in resting cells but enhanced upon viral infection. Interacts with influenza A virus NS1. Post-translationally, ISGylated. Expressed in testis and to a lesser degree in brain, ovary and placenta. Found in most tissues at low levels.

The protein resides in the cytoplasm. Its subcellular location is the perinuclear region. Major E3 ligase for ISG15 conjugation. Acts as a positive regulator of innate antiviral response in cells induced by interferon. Functions as part of the ISGylation machinery that recognizes target proteins in a broad and relatively non-specific manner. Catalyzes ISGylation of IRF3 which results in sustained activation, it attenuates IRF3-PIN1 interaction, which antagonizes IRF3 ubiquitination and degradation, and boosts the antiviral response. Mediates ISGylation of the phosphatase PTEN leading to its degradation, thus alleviating its suppression of the PI3K-AKT signaling pathway and promoting the production of cytokines that facilitate bacterial clearance. Interferes with the function of key viral structural proteins such as ebolavirus structural protein VP40 or HIV-1 protein GAG. Catalyzes ISGylation of influenza A viral NS1 which attenuates virulence; ISGylated NS1 fails to form homodimers and thus to interact with its RNA targets. Catalyzes ISGylation of papillomavirus type 16 L1 protein which results in dominant-negative effect on virus infectivity. Physically associated with polyribosomes, broadly modifies newly synthesized proteins in a cotranslational manner. In an interferon-stimulated cell, newly translated viral proteins are primary targets of ISG15. Promotes parkin/PRKN ubiquitin E3 ligase activity by suppressing the intramolecular interaction that maintains its autoinhibited conformation. Functionally, (Microbial infection) Functions as an E3 ligase for ISGylation of hepatitis B virus protein X leading to enhanced viral replication due to increased interferon resistance. This Homo sapiens (Human) protein is E3 ISG15--protein ligase HERC5 (HERC5).